Consider the following 222-residue polypeptide: 7-cyano-7-deazaguanine synthase (222 aa).

ATP is bound at residue 8-18 (LSGGLDSATCL). Positions 187, 197, 200, and 203 each coordinate Zn(2+).

It belongs to the QueC family. It depends on Zn(2+) as a cofactor.

It catalyses the reaction 7-carboxy-7-deazaguanine + NH4(+) + ATP = 7-cyano-7-deazaguanine + ADP + phosphate + H2O + H(+). It participates in purine metabolism; 7-cyano-7-deazaguanine biosynthesis. Catalyzes the ATP-dependent conversion of 7-carboxy-7-deazaguanine (CDG) to 7-cyano-7-deazaguanine (preQ(0)). This is 7-cyano-7-deazaguanine synthase from Alcanivorax borkumensis (strain ATCC 700651 / DSM 11573 / NCIMB 13689 / SK2).